A 330-amino-acid chain; its full sequence is MKTAYIAKQRQISFVKSHFSRQLEERLGLIEVQAPILSRVGDGTQDNLSGCEKAVQVKVKALPDAQFEVVHSLAKWKRQTLGQHDFSAGEGLYTHMKALRPDEDRLSPLHSVYVDQWDWERVMGDGERQFSTLKSTVEAIWEGIKATEAAVSEEFGLAPFLPDQIHFVHSQELLSRYPDLDAKGRERAIAKDLGAVFLVGIGGKLSDGHRHDVRAPDYDDWSTPSELGHAGLNGDILVWNPVLEDAFELSSMGIRVDADTLKHQLALTGDEDRLQLEWHQALLRGEMPQTIGGGIGQSRLTMLLLQLPHIGQVQCGVWPAAVRESVPSLL.

Belongs to the class-II aminoacyl-tRNA synthetase family. AsnA subfamily.

It localises to the cytoplasm. The catalysed reaction is L-aspartate + NH4(+) + ATP = L-asparagine + AMP + diphosphate + H(+). It functions in the pathway amino-acid biosynthesis; L-asparagine biosynthesis; L-asparagine from L-aspartate (ammonia route): step 1/1. This is Aspartate--ammonia ligase from Escherichia coli O17:K52:H18 (strain UMN026 / ExPEC).